The chain runs to 714 residues: Fatty acid oxidation complex subunit alpha (714 aa).

An enoyl-CoA hydratase region spans residues 1-190 (MDTVSAFKLE…KAGLVDEVVP (190 aa)). Residues 306-714 (GPLTSIAVLG…TFWPADERLT (409 aa)) are 3-hydroxyacyl-CoA dehydrogenase.

In the N-terminal section; belongs to the enoyl-CoA hydratase/isomerase family. This sequence in the central section; belongs to the 3-hydroxyacyl-CoA dehydrogenase family. Heterotetramer of two alpha chains (FadJ) and two beta chains (FadI).

The protein resides in the cytoplasm. It carries out the reaction a (3S)-3-hydroxyacyl-CoA = a (2E)-enoyl-CoA + H2O. The enzyme catalyses a 4-saturated-(3S)-3-hydroxyacyl-CoA = a (3E)-enoyl-CoA + H2O. The catalysed reaction is a (3S)-3-hydroxyacyl-CoA + NAD(+) = a 3-oxoacyl-CoA + NADH + H(+). It catalyses the reaction (3S)-3-hydroxybutanoyl-CoA = (3R)-3-hydroxybutanoyl-CoA. It participates in lipid metabolism; fatty acid beta-oxidation. Catalyzes the formation of a hydroxyacyl-CoA by addition of water on enoyl-CoA. Also exhibits 3-hydroxyacyl-CoA epimerase and 3-hydroxyacyl-CoA dehydrogenase activities. The sequence is that of Fatty acid oxidation complex subunit alpha from Klebsiella pneumoniae (strain 342).